We begin with the raw amino-acid sequence, 92 residues long: Small ribosomal subunit protein uS19c (92 aa).

Belongs to the universal ribosomal protein uS19 family.

It is found in the plastid. The protein resides in the chloroplast. Functionally, protein S19 forms a complex with S13 that binds strongly to the 16S ribosomal RNA. The sequence is that of Small ribosomal subunit protein uS19c from Gracilaria tenuistipitata var. liui (Red alga).